Here is a 119-residue protein sequence, read N- to C-terminus: Large ribosomal subunit protein uL14 (119 aa).

This sequence belongs to the universal ribosomal protein uL14 family. Part of the 50S ribosomal subunit. Forms a cluster with proteins L3 and L19. In the 70S ribosome, L14 and L19 interact and together make contacts with the 16S rRNA in bridges B5 and B8.

Binds to 23S rRNA. Forms part of two intersubunit bridges in the 70S ribosome. The protein is Large ribosomal subunit protein uL14 of Anaplasma phagocytophilum (strain HZ).